A 196-amino-acid polypeptide reads, in one-letter code: Probable GTP-binding protein EngB (196 aa).

Residues 22–194 form the EngB-type G domain; it reads DKKEIAFAGR…LKTIGEILGD (173 aa). GTP-binding positions include 30–37, 56–60, 74–77, 141–144, and 173–175; these read GRSNVGKS, GKTRS, DLPG, TKSD, and FSS. Positions 37 and 58 each coordinate Mg(2+).

It belongs to the TRAFAC class TrmE-Era-EngA-EngB-Septin-like GTPase superfamily. EngB GTPase family. Mg(2+) serves as cofactor.

Functionally, necessary for normal cell division and for the maintenance of normal septation. In Petrotoga mobilis (strain DSM 10674 / SJ95), this protein is Probable GTP-binding protein EngB.